Reading from the N-terminus, the 44-residue chain is uncharacterized protein (44 aa).

This is an uncharacterized protein from Haemophilus influenzae (strain ATCC 51907 / DSM 11121 / KW20 / Rd).